Consider the following 303-residue polypeptide: ATP phosphoribosyltransferase (303 aa).

The protein belongs to the ATP phosphoribosyltransferase family. Long subfamily. The cofactor is Mg(2+).

It is found in the cytoplasm. It carries out the reaction 1-(5-phospho-beta-D-ribosyl)-ATP + diphosphate = 5-phospho-alpha-D-ribose 1-diphosphate + ATP. It functions in the pathway amino-acid biosynthesis; L-histidine biosynthesis; L-histidine from 5-phospho-alpha-D-ribose 1-diphosphate: step 1/9. Its activity is regulated as follows. Feedback inhibited by histidine. Functionally, catalyzes the condensation of ATP and 5-phosphoribose 1-diphosphate to form N'-(5'-phosphoribosyl)-ATP (PR-ATP). Has a crucial role in the pathway because the rate of histidine biosynthesis seems to be controlled primarily by regulation of HisG enzymatic activity. This is ATP phosphoribosyltransferase from Haemophilus influenzae (strain PittEE).